Reading from the N-terminus, the 608-residue chain is MPRDPNTLSNYNNWRTKHTIADLAIDFKKQRVHGTVTLQLESITDKESEEIILDTSFVDVQKIAVDGSKTEEWVLKERNEPYGSPLSVKIPGGAAKGTIIALDITISTTDKCTALQWLTPAQTSNKKFPYMFSQCQAIHNRSIFPCQDTPDVKSTYDFRIRSPLPVLASGLPRGAASFVHGENGESGTLLYSFYQEIPMPSYLFALSSGDIATASIGSRSLVSTGPEELLGAKWELERDTEKFIETIEKIVYPYEWTQYNVLVLPPSFPYGGMENPVFTFATPTIISGDRENVDVIAHELAHSWSGNLVSNASWEHFWLNEGWTVYLERRIIAAVHGEAYRDFSSIIGWKALEDSVKLFGEDHEFTKLVVDLKGKDPDDAFSSVPYEKGFHFLYYLERLVGKPTWDKFIPHYFTTWKKKSLDSYEFKATLLDFFASDEAASKALESVDWDSWFYKPGLPPKPEFDTSLVDKCYALAKKWESKDFVPSPSDIEGWSANQVVVFLQQVQLFTTPLTPSQSQAMGKAYSLVDTQNVELSSRYFGVGLAAKDESVYLPTAELLGKVGRMKFVRTLYRKLLVVDRKLAEETFEKNKDFYHPICREQVEKDLKE.

Residues 134-136 and 269-274 each bind substrate; these read QCQ and PYGGME. Position 298 (His298) interacts with Zn(2+). Residue Glu299 is the Proton acceptor of the active site. Positions 302 and 321 each coordinate Zn(2+). Tyr386 serves as the catalytic Proton donor.

It belongs to the peptidase M1 family. It depends on Zn(2+) as a cofactor.

The protein resides in the cytoplasm. Its subcellular location is the nucleus. It carries out the reaction an epoxide + H2O = an ethanediol. Functionally, aminopeptidase that preferentially cleaves di- and tripeptides. Also has low epoxide hydrolase activity (in vitro). Can hydrolyze the epoxide leukotriene LTA(4) but it forms preferentially 5,6-dihydroxy-7,9,11,14-eicosatetraenoic acid rather than the cytokine leukotriene B(4) as the product compared to the homologous mammalian enzyme (in vitro). This chain is Leucine aminopeptidase 2, found in Sclerotinia sclerotiorum (strain ATCC 18683 / 1980 / Ss-1) (White mold).